Here is a 475-residue protein sequence, read N- to C-terminus: MKMPLNIGLIHFVGIGGIGMSGIAEVFHNLGYKVQGSDQIDNANVKRLQDKGIQVHVGHHAENLGDAEFVVLSTAIKKTNPEYIAAKERHLPLVKRAEMLAELMRFRRAIAVGGTHGKTTTTSMIAALLDAGSFDPMVINGGIINAYGTNARMGEGDWMVVEADESDGTFLKLPADIAVVTNIDREHLDHYGSFAAVRDAFRQFVENVPFYGFAVLCIDHPEVQSLASRIDDRWVITYGANPQADIRFLNLSMDGQKTYFDVFMRSRKTGRETELKNLVLPMSGQHNVSNATAAIAIAHELGISNESIKKGLAGFGGVKRRFTQIGSWRGVEIFDDYGHHPVEIKAVLCAARESAKGRVIAIAQPHRYSRLYHLFDDFAACFNDADIVLIAPVYAAGEEPITGFGARELVEHIQMAGHRDVRLIDCLEDVVSIVSTFSKSGDYVVFLGAGNITQWACALPNQLAVFDNNDKFSAD.

114-120 (GTHGKTT) serves as a coordination point for ATP.

This sequence belongs to the MurCDEF family.

The protein localises to the cytoplasm. The enzyme catalyses UDP-N-acetyl-alpha-D-muramate + L-alanine + ATP = UDP-N-acetyl-alpha-D-muramoyl-L-alanine + ADP + phosphate + H(+). Its pathway is cell wall biogenesis; peptidoglycan biosynthesis. In terms of biological role, cell wall formation. This Bartonella henselae (strain ATCC 49882 / DSM 28221 / CCUG 30454 / Houston 1) (Rochalimaea henselae) protein is UDP-N-acetylmuramate--L-alanine ligase.